The sequence spans 272 residues: NH(3)-dependent NAD(+) synthetase (272 aa).

45–52 (GISGGQDS) provides a ligand contact to ATP. Residue Asp51 participates in Mg(2+) binding. Arg138 is a deamido-NAD(+) binding site. Thr158 contacts ATP. Residue Glu163 coordinates Mg(2+). The deamido-NAD(+) site is built by Lys171 and Asp178. 2 residues coordinate ATP: Lys187 and Thr209. Deamido-NAD(+) is bound at residue 258 to 259 (HK).

It belongs to the NAD synthetase family. As to quaternary structure, homodimer.

The catalysed reaction is deamido-NAD(+) + NH4(+) + ATP = AMP + diphosphate + NAD(+) + H(+). It functions in the pathway cofactor biosynthesis; NAD(+) biosynthesis; NAD(+) from deamido-NAD(+) (ammonia route): step 1/1. Its function is as follows. Catalyzes the ATP-dependent amidation of deamido-NAD to form NAD. Uses ammonia as a nitrogen source. In Bacillus cereus (strain 03BB102), this protein is NH(3)-dependent NAD(+) synthetase.